We begin with the raw amino-acid sequence, 302 residues long: Lactoylglutathione lyase (302 aa).

VOC domains lie at 11 to 153 (KLNH…LVSQ) and 166 to 301 (RFNH…VIEQ). Residue His-14 participates in Zn(2+) binding. Position 18 (Arg-18) interacts with substrate. Zn(2+) is bound at residue Glu-75. Residues Asn-79, Arg-99, and His-103 each contribute to the substrate site. Zn(2+) is bound by residues His-103 and Glu-149. Glu-149 functions as the Proton donor/acceptor in the catalytic mechanism.

Belongs to the glyoxalase I family. As to quaternary structure, monomer. Zn(2+) is required as a cofactor. Requires Cu(2+) as cofactor. The cofactor is Ni(2+). It depends on Mn(2+) as a cofactor.

The catalysed reaction is (R)-S-lactoylglutathione = methylglyoxal + glutathione. Its pathway is secondary metabolite metabolism; methylglyoxal degradation; (R)-lactate from methylglyoxal: step 1/2. Catalyzes the conversion of hemimercaptal, formed from methylglyoxal and glutathione, to S-lactoylglutathione. This Schizosaccharomyces pombe (strain 972 / ATCC 24843) (Fission yeast) protein is Lactoylglutathione lyase (glo1).